A 306-amino-acid polypeptide reads, in one-letter code: Acetyl-coenzyme A carboxylase carboxyl transferase subunit beta (306 aa).

The 270-residue stretch at 25–294 (LWIKDPTSGE…VVNPSNTSST (270 aa)) folds into the CoA carboxyltransferase N-terminal domain. The span at 287 to 296 (NPSNTSSTNS) shows a compositional bias: low complexity. Residues 287–306 (NPSNTSSTNSQASLSKAEAA) form a disordered region.

The protein belongs to the AccD/PCCB family. In terms of assembly, acetyl-CoA carboxylase is a heterohexamer composed of biotin carboxyl carrier protein (AccB), biotin carboxylase (AccC) and two subunits each of ACCase subunit alpha (AccA) and ACCase subunit beta (AccD).

The protein localises to the cytoplasm. The enzyme catalyses N(6)-carboxybiotinyl-L-lysyl-[protein] + acetyl-CoA = N(6)-biotinyl-L-lysyl-[protein] + malonyl-CoA. Its pathway is lipid metabolism; malonyl-CoA biosynthesis; malonyl-CoA from acetyl-CoA: step 1/1. Its function is as follows. Component of the acetyl coenzyme A carboxylase (ACC) complex. Biotin carboxylase (BC) catalyzes the carboxylation of biotin on its carrier protein (BCCP) and then the CO(2) group is transferred by the transcarboxylase to acetyl-CoA to form malonyl-CoA. The polypeptide is Acetyl-coenzyme A carboxylase carboxyl transferase subunit beta (Bartonella henselae (strain ATCC 49882 / DSM 28221 / CCUG 30454 / Houston 1) (Rochalimaea henselae)).